Consider the following 105-residue polypeptide: MKQQKQRIRIRLKGFDQGQLDQSTANIVETAKRTGARVVGPIPLPTKREVYTVLRSPHVDKKSREQFEIRTHKRLIDILDPTGKTIDALKMLSLPAGVDIKIKAA.

This sequence belongs to the universal ribosomal protein uS10 family. Part of the 30S ribosomal subunit.

Its function is as follows. Involved in the binding of tRNA to the ribosomes. In Chlamydia muridarum (strain MoPn / Nigg), this protein is Small ribosomal subunit protein uS10.